The primary structure comprises 129 residues: MAKEATRVRRRERKNISSGVAHVNSTFNNTMITITDAQGNAIAWSSAGAQGFKGSRKSTPFAAQIAAEDCAKKAQEHGMRSLEVEVCGPGSGRESALRALQAAGFVITSIRDVTPIPHNGCRPRKKRRV.

Belongs to the universal ribosomal protein uS11 family. As to quaternary structure, part of the 30S ribosomal subunit. Interacts with proteins S7 and S18. Binds to IF-3.

Its function is as follows. Located on the platform of the 30S subunit, it bridges several disparate RNA helices of the 16S rRNA. Forms part of the Shine-Dalgarno cleft in the 70S ribosome. This Brucella abortus (strain S19) protein is Small ribosomal subunit protein uS11.